Reading from the N-terminus, the 903-residue chain is Protein translocase subunit SecA (903 aa).

ATP is bound by residues glutamine 87, 105–109 (GEGKT), and aspartate 512. Positions 853–903 (KQQQLSHYEENALVTEDPNAPATAERKVGRNDPCPCGSGKKYKQCHGRLQS) are disordered. Zn(2+) is bound by residues cysteine 886, cysteine 888, cysteine 897, and histidine 898. Residues 892–903 (KKYKQCHGRLQS) show a composition bias toward basic residues.

Belongs to the SecA family. As to quaternary structure, monomer and homodimer. Part of the essential Sec protein translocation apparatus which comprises SecA, SecYEG and auxiliary proteins SecDF-YajC and YidC. It depends on Zn(2+) as a cofactor.

The protein resides in the cell inner membrane. Its subcellular location is the cytoplasm. It carries out the reaction ATP + H2O + cellular proteinSide 1 = ADP + phosphate + cellular proteinSide 2.. Functionally, part of the Sec protein translocase complex. Interacts with the SecYEG preprotein conducting channel. Has a central role in coupling the hydrolysis of ATP to the transfer of proteins into and across the cell membrane, serving both as a receptor for the preprotein-SecB complex and as an ATP-driven molecular motor driving the stepwise translocation of polypeptide chains across the membrane. The chain is Protein translocase subunit SecA from Serratia proteamaculans (strain 568).